Here is a 481-residue protein sequence, read N- to C-terminus: Aspartyl/glutamyl-tRNA(Asn/Gln) amidotransferase subunit B (481 aa).

It belongs to the GatB/GatE family. GatB subfamily. Heterotrimer of A, B and C subunits.

The catalysed reaction is L-glutamyl-tRNA(Gln) + L-glutamine + ATP + H2O = L-glutaminyl-tRNA(Gln) + L-glutamate + ADP + phosphate + H(+). It catalyses the reaction L-aspartyl-tRNA(Asn) + L-glutamine + ATP + H2O = L-asparaginyl-tRNA(Asn) + L-glutamate + ADP + phosphate + 2 H(+). Allows the formation of correctly charged Asn-tRNA(Asn) or Gln-tRNA(Gln) through the transamidation of misacylated Asp-tRNA(Asn) or Glu-tRNA(Gln) in organisms which lack either or both of asparaginyl-tRNA or glutaminyl-tRNA synthetases. The reaction takes place in the presence of glutamine and ATP through an activated phospho-Asp-tRNA(Asn) or phospho-Glu-tRNA(Gln). The protein is Aspartyl/glutamyl-tRNA(Asn/Gln) amidotransferase subunit B of Marinomonas sp. (strain MWYL1).